A 154-amino-acid polypeptide reads, in one-letter code: Large ribosomal subunit protein uL13 (154 aa).

This sequence belongs to the universal ribosomal protein uL13 family. As to quaternary structure, part of the 50S ribosomal subunit.

In terms of biological role, this protein is one of the early assembly proteins of the 50S ribosomal subunit, although it is not seen to bind rRNA by itself. It is important during the early stages of 50S assembly. The polypeptide is Large ribosomal subunit protein uL13 (Bradyrhizobium sp. (strain BTAi1 / ATCC BAA-1182)).